The primary structure comprises 877 residues: Phosphoenolpyruvate carboxylase (877 aa).

Catalysis depends on residues histidine 137 and lysine 544.

It belongs to the PEPCase type 1 family. It depends on Mg(2+) as a cofactor.

The enzyme catalyses oxaloacetate + phosphate = phosphoenolpyruvate + hydrogencarbonate. Its function is as follows. Forms oxaloacetate, a four-carbon dicarboxylic acid source for the tricarboxylic acid cycle. The chain is Phosphoenolpyruvate carboxylase from Edwardsiella ictaluri (strain 93-146).